Consider the following 118-residue polypeptide: DNA-binding protein MmarC6_0793 (118 aa).

Basic and acidic residues predominate over residues 1–12; that stretch reads MNPEEIRQRRLQ. A disordered region spans residues 1-33; it reads MNPEEIRQRRLQEMQAKAQEQGAQDPEAQRQMQ. Residues 24 to 33 show a composition bias toward low complexity; that stretch reads QDPEAQRQMQ.

The protein belongs to the PDCD5 family.

This is DNA-binding protein MmarC6_0793 from Methanococcus maripaludis (strain C6 / ATCC BAA-1332).